The primary structure comprises 402 residues: Phosphoglycerate kinase (402 aa).

Residues 30 to 32, R46, 70 to 73, R126, and R159 contribute to the substrate site; these read DFN and HLGR. ATP-binding positions include K210, E332, and 358–361; that span reads GGDT.

The protein belongs to the phosphoglycerate kinase family. As to quaternary structure, monomer.

Its subcellular location is the cytoplasm. The catalysed reaction is (2R)-3-phosphoglycerate + ATP = (2R)-3-phospho-glyceroyl phosphate + ADP. It functions in the pathway carbohydrate degradation; glycolysis; pyruvate from D-glyceraldehyde 3-phosphate: step 2/5. This is Phosphoglycerate kinase from Helicobacter hepaticus (strain ATCC 51449 / 3B1).